A 395-amino-acid chain; its full sequence is S-adenosylmethionine synthase (395 aa).

Residue histidine 16 coordinates ATP. Aspartate 18 contributes to the Mg(2+) binding site. Residue glutamate 44 participates in K(+) binding. Positions 57 and 100 each coordinate L-methionine. Positions 100-110 are flexible loop; it reads QSPDIAQGVDR. ATP contacts are provided by residues 167–169, 233–234, aspartate 242, 248–249, alanine 265, and lysine 269; these read DAK, RF, and RK. Position 242 (aspartate 242) interacts with L-methionine. Lysine 273 provides a ligand contact to L-methionine.

The protein belongs to the AdoMet synthase family. As to quaternary structure, homotetramer; dimer of dimers. Requires Mg(2+) as cofactor. K(+) is required as a cofactor.

It localises to the cytoplasm. The catalysed reaction is L-methionine + ATP + H2O = S-adenosyl-L-methionine + phosphate + diphosphate. Its pathway is amino-acid biosynthesis; S-adenosyl-L-methionine biosynthesis; S-adenosyl-L-methionine from L-methionine: step 1/1. Catalyzes the formation of S-adenosylmethionine (AdoMet) from methionine and ATP. The overall synthetic reaction is composed of two sequential steps, AdoMet formation and the subsequent tripolyphosphate hydrolysis which occurs prior to release of AdoMet from the enzyme. The sequence is that of S-adenosylmethionine synthase from Burkholderia cenocepacia (strain ATCC BAA-245 / DSM 16553 / LMG 16656 / NCTC 13227 / J2315 / CF5610) (Burkholderia cepacia (strain J2315)).